A 557-amino-acid chain; its full sequence is Phosphoribosylaminoimidazole carboxylase, chloroplastic (557 aa).

The region spanning 108 to 293 (KVALLPAWIP…QFEQHLPAVV (186 aa)) is the ATP-grasp domain. Position 132 to 189 (132 to 189 (WDSLDIHFMIKSRRLAYDGRGNFVAKSEEELSSAVDALGGFDRGLYAEKWAPFVKELA)) interacts with ATP. The interval 387-557 (CSTLLGFIMG…HGWESYLKNS (171 aa)) is AIR carboxylase catalytic subunit.

This sequence in the C-terminal section; belongs to the AIR carboxylase family. Class I subfamily.

It localises to the plastid. The protein resides in the chloroplast. The catalysed reaction is 5-amino-1-(5-phospho-D-ribosyl)imidazole-4-carboxylate + H(+) = 5-amino-1-(5-phospho-beta-D-ribosyl)imidazole + CO2. Its pathway is purine metabolism; IMP biosynthesis via de novo pathway; 5-amino-1-(5-phospho-D-ribosyl)imidazole-4-carboxylate from 5-amino-1-(5-phospho-D-ribosyl)imidazole (carboxylase route): step 1/1. This Vigna aconitifolia (Moth bean) protein is Phosphoribosylaminoimidazole carboxylase, chloroplastic (PURKE).